A 325-amino-acid polypeptide reads, in one-letter code: MTVTPSGSNGAGSAAPEGRKLLRLEVRNAQTPIERKPPWIKTRARMGPEYKELKSLVKREGLHTVCEEAGCPNIFECWEDREATFLIGGEQCTRRCDFCQIDTGKPSELDRDEPRRVAESVQAMGLRYSTVTGVARDDLPDGGAWLYAETVREIKRLNPNTGVELLIPDFNGDPALLAQVFESRPEVLAHNVETVPRIFKRIRPAFRYERSLAVLTAARDDNLVTKSNLILGMGETPDEVRTALVDLHEAGCDIITITQYLRPSPRHHPVERWVKPEEFVEFAQFAEGLGFAGVLSGPLVRSSYRAGRLYAQAARLKPAATPPVS.

Positions 66, 71, 77, 92, 96, 99, and 303 each coordinate [4Fe-4S] cluster. A Radical SAM core domain is found at 78 to 292 (WEDREATFLI…AQFAEGLGFA (215 aa)).

The protein belongs to the radical SAM superfamily. Lipoyl synthase family. [4Fe-4S] cluster is required as a cofactor.

The protein localises to the cytoplasm. It carries out the reaction [[Fe-S] cluster scaffold protein carrying a second [4Fe-4S](2+) cluster] + N(6)-octanoyl-L-lysyl-[protein] + 2 oxidized [2Fe-2S]-[ferredoxin] + 2 S-adenosyl-L-methionine + 4 H(+) = [[Fe-S] cluster scaffold protein] + N(6)-[(R)-dihydrolipoyl]-L-lysyl-[protein] + 4 Fe(3+) + 2 hydrogen sulfide + 2 5'-deoxyadenosine + 2 L-methionine + 2 reduced [2Fe-2S]-[ferredoxin]. Its pathway is protein modification; protein lipoylation via endogenous pathway; protein N(6)-(lipoyl)lysine from octanoyl-[acyl-carrier-protein]: step 2/2. In terms of biological role, catalyzes the radical-mediated insertion of two sulfur atoms into the C-6 and C-8 positions of the octanoyl moiety bound to the lipoyl domains of lipoate-dependent enzymes, thereby converting the octanoylated domains into lipoylated derivatives. The polypeptide is Lipoyl synthase (Mycobacterium sp. (strain JLS)).